Consider the following 567-residue polypeptide: Dihydroxy-acid dehydratase 2 (567 aa).

Residue cysteine 56 participates in [2Fe-2S] cluster binding. Aspartate 88 lines the Mg(2+) pocket. Cysteine 129 is a binding site for [2Fe-2S] cluster. Mg(2+) is bound by residues aspartate 130 and lysine 131. The residue at position 131 (lysine 131) is an N6-carboxylysine. A [2Fe-2S] cluster-binding site is contributed by cysteine 206. Mg(2+) is bound at residue glutamate 457. Serine 483 serves as the catalytic Proton acceptor.

The protein belongs to the IlvD/Edd family. In terms of assembly, homodimer. Requires [2Fe-2S] cluster as cofactor. Mg(2+) is required as a cofactor.

It catalyses the reaction (2R)-2,3-dihydroxy-3-methylbutanoate = 3-methyl-2-oxobutanoate + H2O. The enzyme catalyses (2R,3R)-2,3-dihydroxy-3-methylpentanoate = (S)-3-methyl-2-oxopentanoate + H2O. The protein operates within amino-acid biosynthesis; L-isoleucine biosynthesis; L-isoleucine from 2-oxobutanoate: step 3/4. It participates in amino-acid biosynthesis; L-valine biosynthesis; L-valine from pyruvate: step 3/4. Functions in the biosynthesis of branched-chain amino acids. Catalyzes the dehydration of (2R,3R)-2,3-dihydroxy-3-methylpentanoate (2,3-dihydroxy-3-methylvalerate) into 2-oxo-3-methylpentanoate (2-oxo-3-methylvalerate) and of (2R)-2,3-dihydroxy-3-methylbutanoate (2,3-dihydroxyisovalerate) into 2-oxo-3-methylbutanoate (2-oxoisovalerate), the penultimate precursor to L-isoleucine and L-valine, respectively. This is Dihydroxy-acid dehydratase 2 from Corynebacterium efficiens (strain DSM 44549 / YS-314 / AJ 12310 / JCM 11189 / NBRC 100395).